The chain runs to 1347 residues: Spermatogenesis-associated protein 31A7 (1347 aa).

The chain crosses the membrane as a helical span at residues 23 to 43 (PWVLDIFLTLVFALGFFFLLL). Disordered stretches follow at residues 55-88 (PSPS…RECP), 106-233 (GPHL…RDST), 374-397 (QDTT…GPQK), 628-658 (DESP…EAQK), 900-955 (RGIP…REAV), 1084-1161 (VHEE…PSVS), and 1313-1335 (KAVS…SHHH). A compositionally biased stretch (basic residues) spans 60–82 (GKRKCPVGRRRRPRGRMKNHSLR). The segment covering 165-178 (LASTPSPGPMTTSV) has biased composition (polar residues). The segment covering 198–211 (PEPPALFPHPPHTP) has biased composition (pro residues). Composition is skewed to polar residues over residues 631–651 (PGTS…STGE) and 927–948 (LTYS…SSKA). Composition is skewed to basic and acidic residues over residues 1108-1127 (HKSE…RLEG) and 1137-1146 (RKTEDTHQDE).

The protein belongs to the SPATA31 family.

It localises to the membrane. Its function is as follows. May play a role in spermatogenesis. The polypeptide is Spermatogenesis-associated protein 31A7 (Homo sapiens (Human)).